The primary structure comprises 124 residues: Small ribosomal subunit protein uS13 (124 aa).

The interval glycine 95–lysine 124 is disordered.

It belongs to the universal ribosomal protein uS13 family. Part of the 30S ribosomal subunit. Forms a loose heterodimer with protein S19. Forms two bridges to the 50S subunit in the 70S ribosome.

Its function is as follows. Located at the top of the head of the 30S subunit, it contacts several helices of the 16S rRNA. In the 70S ribosome it contacts the 23S rRNA (bridge B1a) and protein L5 of the 50S subunit (bridge B1b), connecting the 2 subunits; these bridges are implicated in subunit movement. Contacts the tRNAs in the A and P-sites. This chain is Small ribosomal subunit protein uS13, found in Rhodococcus erythropolis (strain PR4 / NBRC 100887).